The chain runs to 174 residues: Shikimate kinase 2 (174 aa).

An ATP-binding site is contributed by 12-17 (GCGKTT). Positions 16 and 32 each coordinate Mg(2+). Residues D34, R58, and G79 each coordinate substrate. Residues 112–126 (QAAPEEDLRPTLTGK) form an LID domain region. R120 is an ATP binding site. Position 139 (R139) interacts with substrate.

The protein belongs to the shikimate kinase family. AroL subfamily. Monomer. Requires Mg(2+) as cofactor.

The protein localises to the cytoplasm. The catalysed reaction is shikimate + ATP = 3-phosphoshikimate + ADP + H(+). It functions in the pathway metabolic intermediate biosynthesis; chorismate biosynthesis; chorismate from D-erythrose 4-phosphate and phosphoenolpyruvate: step 5/7. Functionally, catalyzes the specific phosphorylation of the 3-hydroxyl group of shikimic acid using ATP as a cosubstrate. In Escherichia coli O1:K1 / APEC, this protein is Shikimate kinase 2.